Consider the following 277-residue polypeptide: F-actin-capping protein subunit beta isoforms 1 and 2 (277 aa).

S2 carries the post-translational modification N-acetylserine.

This sequence belongs to the F-actin-capping protein beta subunit family. In terms of assembly, component of the F-actin capping complex, composed of a heterodimer of an alpha and a beta subunit. Component of the WASH complex. Component of the F-actin capping complex, composed of a heterodimer of an alpha and a beta subunit. Subunit of dynactin, a multiprotein complex part of a tripartite complex with dynein and a adapter, such as BICDL1, BICD2 or HOOK3. The dynactin complex is built around ACTR1A/ACTB filament and consists of an actin-related filament composed of a shoulder domain, a pointed end and a barbed end. Its length is defined by its flexible shoulder domain. Isoform 1 is detected in pectoral muscle, cardiac muscle and gizzard. Isoform 2 is detected in brain and liver (at protein level). Isoform 2 is the predominant isoform of nonmuscle tissues and isoform 1 is the predominant isoform of muscle tissues.

The protein localises to the cytoplasm. Its subcellular location is the myofibril. It localises to the sarcomere. It is found in the z line. The protein resides in the i band. The protein localises to the cytoskeleton. Functionally, F-actin-capping proteins bind in a Ca(2+)-independent manner to the fast growing ends of actin filaments (barbed end) thereby blocking the exchange of subunits at these ends. Unlike other capping proteins (such as gelsolin and severin), these proteins do not sever actin filaments. May play a role in the regulation of cell morphology and cytoskeletal organization. Forms, with CAPZB, the barbed end of the fast growing ends of actin filaments in the dynactin complex and stabilizes dynactin structure. The dynactin multiprotein complex activates the molecular motor dynein for ultra-processive transport along microtubules. The chain is F-actin-capping protein subunit beta isoforms 1 and 2 (CAPZB) from Gallus gallus (Chicken).